The primary structure comprises 743 residues: 1,4-alpha-glucan branching enzyme GlgB (743 aa).

Catalysis depends on Asp-423, which acts as the Nucleophile. Glu-476 serves as the catalytic Proton donor.

The protein belongs to the glycosyl hydrolase 13 family. GlgB subfamily. As to quaternary structure, monomer.

The enzyme catalyses Transfers a segment of a (1-&gt;4)-alpha-D-glucan chain to a primary hydroxy group in a similar glucan chain.. Its pathway is glycan biosynthesis; glycogen biosynthesis. Its function is as follows. Catalyzes the formation of the alpha-1,6-glucosidic linkages in glycogen by scission of a 1,4-alpha-linked oligosaccharide from growing alpha-1,4-glucan chains and the subsequent attachment of the oligosaccharide to the alpha-1,6 position. The polypeptide is 1,4-alpha-glucan branching enzyme GlgB (Pseudomonas fluorescens (strain ATCC BAA-477 / NRRL B-23932 / Pf-5)).